The sequence spans 361 residues: Peptide chain release factor 1 (361 aa).

N5-methylglutamine is present on Gln235. Residues 284-306 (SQQATAEAMTRKLQVGSGDRSQR) are disordered.

This sequence belongs to the prokaryotic/mitochondrial release factor family. Methylated by PrmC. Methylation increases the termination efficiency of RF1.

Its subcellular location is the cytoplasm. Peptide chain release factor 1 directs the termination of translation in response to the peptide chain termination codons UAG and UAA. The protein is Peptide chain release factor 1 of Xylella fastidiosa (strain 9a5c).